We begin with the raw amino-acid sequence, 188 residues long: Protein GrpE (188 aa).

The span at 1–10 (MPDPTQNPNV) shows a compositional bias: polar residues. Positions 1-35 (MPDPTQNPNVTPELEQHAAPEAAAEAAPESSADVM) are disordered. Positions 19–32 (APEAAAEAAPESSA) are enriched in low complexity.

This sequence belongs to the GrpE family. Homodimer.

Its subcellular location is the cytoplasm. Its function is as follows. Participates actively in the response to hyperosmotic and heat shock by preventing the aggregation of stress-denatured proteins, in association with DnaK and GrpE. It is the nucleotide exchange factor for DnaK and may function as a thermosensor. Unfolded proteins bind initially to DnaJ; upon interaction with the DnaJ-bound protein, DnaK hydrolyzes its bound ATP, resulting in the formation of a stable complex. GrpE releases ADP from DnaK; ATP binding to DnaK triggers the release of the substrate protein, thus completing the reaction cycle. Several rounds of ATP-dependent interactions between DnaJ, DnaK and GrpE are required for fully efficient folding. This chain is Protein GrpE, found in Azoarcus sp. (strain BH72).